A 251-amino-acid chain; its full sequence is Phosphosulfolactate synthase (251 aa).

This sequence belongs to the phosphosulfolactate synthase family. Homotrimer. It depends on Mg(2+) as a cofactor.

It carries out the reaction (2R)-O-phospho-3-sulfolactate = phosphoenolpyruvate + sulfite + H(+). It participates in cofactor biosynthesis; coenzyme M biosynthesis; sulfoacetaldehyde from phosphoenolpyruvate and sulfite: step 1/4. In terms of biological role, catalyzes the addition of sulfite to phosphoenolpyruvate (PEP) to yield (2R)-phospho-3-sulfolactate (PSL). The chain is Phosphosulfolactate synthase (comA) from Methanocaldococcus jannaschii (strain ATCC 43067 / DSM 2661 / JAL-1 / JCM 10045 / NBRC 100440) (Methanococcus jannaschii).